Reading from the N-terminus, the 376-residue chain is Metal tolerance protein 6 (376 aa).

Residues 1–28 (MAAAAGVAAGTGRGSGEGEELLPNAVEG) are disordered. The Cytoplasmic segment spans residues 1–123 (MAAAAGVAAG…CEKVARSEAL (123 aa)). Residues 124-144 (AIRLSNIANMVLFAAKVYASI) traverse the membrane as a helical segment. Over 145-149 (RSGSL) the chain is Vacuolar. Residues 150–170 (AIIASTLDSLLDLLSGFILWF) traverse the membrane as a helical segment. Topologically, residues 171–191 (TAFSKKTSNPYRYPIGKRRMQ) are cytoplasmic. Residues 192 to 212 (PLGILVFASVMATLGLQIILE) form a helical membrane-spanning segment. Residues 213-231 (STRSLFYDGDTFRLTKEQE) are Vacuolar-facing. The helical transmembrane segment at 232-252 (KWVVDIMLSVTSVKLLLVVYC) threads the bilayer. The Cytoplasmic portion of the chain corresponds to 253–376 (RSFTNEILAI…PEHARSHDTL (124 aa)).

This sequence belongs to the cation diffusion facilitator (CDF) transporter (TC 2.A.4) family. SLC30A subfamily.

Its subcellular location is the vacuole membrane. Its function is as follows. Involved in sequestration of excess metal in the cytoplasm into vacuoles to maintain metal homeostasis. This chain is Metal tolerance protein 6 (MTP6), found in Oryza sativa subsp. japonica (Rice).